Consider the following 159-residue polypeptide: Abscisic acid and environmental stress-inducible protein (159 aa).

6 tandem repeats follow at residues 38–49 (GGGYNHGGGGYN), 50–61 (GGGYNHGGGGYN), 63–74 (GGGYNHGGGGYN), 77–88 (GGGYNHGGGGYN), 91–102 (GGGYNHGGGGYN), and 105–116 (GGGYNHGGGGYN). Residues 38 to 135 (GGGYNHGGGG…GYNHGGGGCQ (98 aa)) form a 7 X 12 AA repeats of G-G-G-Y-N-H-G-G-G-Y-N region. Residues 124-135 (GGGYNHGGGGCQ) form a 7; approximate repeat.

It belongs to the GRP family.

The polypeptide is Abscisic acid and environmental stress-inducible protein (Medicago sativa subsp. falcata (Sickle medic)).